We begin with the raw amino-acid sequence, 337 residues long: Beta-hexosaminidase (337 aa).

Residues Asp62, Arg70, Arg133, and 163–164 each bind substrate; that span reads KH. The active-site Proton donor/acceptor is His176. The active-site Nucleophile is the Asp248.

This sequence belongs to the glycosyl hydrolase 3 family. NagZ subfamily.

The protein localises to the cytoplasm. It catalyses the reaction Hydrolysis of terminal non-reducing N-acetyl-D-hexosamine residues in N-acetyl-beta-D-hexosaminides.. It participates in cell wall biogenesis; peptidoglycan recycling. Functionally, plays a role in peptidoglycan recycling by cleaving the terminal beta-1,4-linked N-acetylglucosamine (GlcNAc) from peptide-linked peptidoglycan fragments, giving rise to free GlcNAc, anhydro-N-acetylmuramic acid and anhydro-N-acetylmuramic acid-linked peptides. The polypeptide is Beta-hexosaminidase (Psychromonas ingrahamii (strain DSM 17664 / CCUG 51855 / 37)).